A 340-amino-acid polypeptide reads, in one-letter code: Dihydroorotate dehydrogenase (quinone) (340 aa).

Residues 65-69 and T89 contribute to the FMN site; that span reads AGADK. A substrate-binding site is contributed by K69. 114–118 lines the substrate pocket; that stretch reads NRNGF. 2 residues coordinate FMN: N142 and N175. N175 lines the substrate pocket. The active-site Nucleophile is the S178. N180 contributes to the substrate binding site. Residues K220 and T248 each coordinate FMN. 249–250 serves as a coordination point for substrate; the sequence is NT. FMN-binding positions include G271, G300, and 321–322; that span reads YS.

The protein belongs to the dihydroorotate dehydrogenase family. Type 2 subfamily. Monomer. FMN is required as a cofactor.

It is found in the cell membrane. It carries out the reaction (S)-dihydroorotate + a quinone = orotate + a quinol. It functions in the pathway pyrimidine metabolism; UMP biosynthesis via de novo pathway; orotate from (S)-dihydroorotate (quinone route): step 1/1. Functionally, catalyzes the conversion of dihydroorotate to orotate with quinone as electron acceptor. This Mannheimia succiniciproducens (strain KCTC 0769BP / MBEL55E) protein is Dihydroorotate dehydrogenase (quinone).